A 236-amino-acid polypeptide reads, in one-letter code: Purine nucleoside phosphorylase DeoD-type (236 aa).

Residue His-4 participates in a purine D-ribonucleoside binding. Residues Gly-20, Arg-24, Arg-43, and 87–90 contribute to the phosphate site; that span reads RVGT. Residues 178–180 and 202–203 each bind a purine D-ribonucleoside; these read EME and SD. Asp-203 functions as the Proton donor in the catalytic mechanism.

Belongs to the PNP/UDP phosphorylase family. Homohexamer; trimer of homodimers.

The enzyme catalyses a purine D-ribonucleoside + phosphate = a purine nucleobase + alpha-D-ribose 1-phosphate. The catalysed reaction is a purine 2'-deoxy-D-ribonucleoside + phosphate = a purine nucleobase + 2-deoxy-alpha-D-ribose 1-phosphate. Functionally, catalyzes the reversible phosphorolytic breakdown of the N-glycosidic bond in the beta-(deoxy)ribonucleoside molecules, with the formation of the corresponding free purine bases and pentose-1-phosphate. This chain is Purine nucleoside phosphorylase DeoD-type, found in Geobacillus kaustophilus (strain HTA426).